The chain runs to 365 residues: MLIYLFEWLSHYFKGLEVFSSYISVRIIMISITSLLITLALGRPMISWLQKMQIGQIVRDDGPQSHFSKRNTPTMGGVLILSSVIISCLLWGDLTSIYLWILILVVIFFGAIGFFDDYLKLVLKHPKGLRAKHKFALQSIFSIVLAIVLFYLLSKNGQMSLSIPFSKSLYIPMGIVIFVVLAFFIINGSSNAVNLTDGLDGLAIVPVVLVAAGLGIYAYIETNSTLANYLLFNYLGNPGLAEVAVFCAAVCGSGLAFLWFNSHPAEVFMGDVGSLTLGAVLGVIAVMVRQELIFFIMGLLFVVEALSVMLQVGSYKLRNGKRIFRMAPIHHHFELKGWPETKVVIRFWIISLILFLIGLAAIKVR.

The next 10 membrane-spanning stretches (helical) occupy residues 22-42, 74-94, 95-115, 134-154, 168-188, 201-221, 240-260, 267-287, 292-312, and 342-362; these read YISV…LALG, TMGG…WGDL, TSIY…IGFF, KFAL…YLLS, SLYI…IING, GLAI…AYIE, LAEV…FLWF, VFMG…IAVM, LIFF…MLQV, and KVVI…LAAI.

This sequence belongs to the glycosyltransferase 4 family. MraY subfamily. Requires Mg(2+) as cofactor.

The protein resides in the cell inner membrane. It carries out the reaction UDP-N-acetyl-alpha-D-muramoyl-L-alanyl-gamma-D-glutamyl-meso-2,6-diaminopimeloyl-D-alanyl-D-alanine + di-trans,octa-cis-undecaprenyl phosphate = di-trans,octa-cis-undecaprenyl diphospho-N-acetyl-alpha-D-muramoyl-L-alanyl-D-glutamyl-meso-2,6-diaminopimeloyl-D-alanyl-D-alanine + UMP. The protein operates within cell wall biogenesis; peptidoglycan biosynthesis. Functionally, catalyzes the initial step of the lipid cycle reactions in the biosynthesis of the cell wall peptidoglycan: transfers peptidoglycan precursor phospho-MurNAc-pentapeptide from UDP-MurNAc-pentapeptide onto the lipid carrier undecaprenyl phosphate, yielding undecaprenyl-pyrophosphoryl-MurNAc-pentapeptide, known as lipid I. This Francisella tularensis subsp. mediasiatica (strain FSC147) protein is Phospho-N-acetylmuramoyl-pentapeptide-transferase.